A 338-amino-acid chain; its full sequence is uncharacterized protein (338 aa).

It belongs to the MG032/MG096/MG288 family.

This is an uncharacterized protein from Mycoplasma pneumoniae (strain ATCC 29342 / M129 / Subtype 1) (Mycoplasmoides pneumoniae).